The primary structure comprises 355 residues: Holliday junction branch migration complex subunit RuvB (355 aa).

The large ATPase domain (RuvB-L) stretch occupies residues 1 to 193 (MGRFSEDSAD…FGFTAHMDFY (193 aa)). ATP contacts are provided by residues Leu32, Arg33, Gly74, Lys77, Thr78, Ser79, 140-142 (EDF), Arg183, Tyr193, and Arg230. Thr78 provides a ligand contact to Mg(2+). A small ATPAse domain (RuvB-S) region spans residues 194–264 (EPSELERVLA…IAKYALEVYD (71 aa)). The interval 267–355 (ELGLDRLDRA…VGLGQTGLFD (89 aa)) is head domain (RuvB-H). The DNA site is built by Arg322 and Arg327.

Belongs to the RuvB family. As to quaternary structure, homohexamer. Forms an RuvA(8)-RuvB(12)-Holliday junction (HJ) complex. HJ DNA is sandwiched between 2 RuvA tetramers; dsDNA enters through RuvA and exits via RuvB. An RuvB hexamer assembles on each DNA strand where it exits the tetramer. Each RuvB hexamer is contacted by two RuvA subunits (via domain III) on 2 adjacent RuvB subunits; this complex drives branch migration. In the full resolvosome a probable DNA-RuvA(4)-RuvB(12)-RuvC(2) complex forms which resolves the HJ.

Its subcellular location is the cytoplasm. It catalyses the reaction ATP + H2O = ADP + phosphate + H(+). Functionally, the RuvA-RuvB-RuvC complex processes Holliday junction (HJ) DNA during genetic recombination and DNA repair, while the RuvA-RuvB complex plays an important role in the rescue of blocked DNA replication forks via replication fork reversal (RFR). RuvA specifically binds to HJ cruciform DNA, conferring on it an open structure. The RuvB hexamer acts as an ATP-dependent pump, pulling dsDNA into and through the RuvAB complex. RuvB forms 2 homohexamers on either side of HJ DNA bound by 1 or 2 RuvA tetramers; 4 subunits per hexamer contact DNA at a time. Coordinated motions by a converter formed by DNA-disengaged RuvB subunits stimulates ATP hydrolysis and nucleotide exchange. Immobilization of the converter enables RuvB to convert the ATP-contained energy into a lever motion, pulling 2 nucleotides of DNA out of the RuvA tetramer per ATP hydrolyzed, thus driving DNA branch migration. The RuvB motors rotate together with the DNA substrate, which together with the progressing nucleotide cycle form the mechanistic basis for DNA recombination by continuous HJ branch migration. Branch migration allows RuvC to scan DNA until it finds its consensus sequence, where it cleaves and resolves cruciform DNA. The chain is Holliday junction branch migration complex subunit RuvB from Mycolicibacterium vanbaalenii (strain DSM 7251 / JCM 13017 / BCRC 16820 / KCTC 9966 / NRRL B-24157 / PYR-1) (Mycobacterium vanbaalenii).